The following is a 504-amino-acid chain: 2,3-bisphosphoglycerate-independent phosphoglycerate mutase (504 aa).

Mn(2+) contacts are provided by aspartate 11 and serine 61. Serine 61 serves as the catalytic Phosphoserine intermediate. Substrate contacts are provided by residues histidine 122, 152–153, arginine 183, arginine 189, 255–258, and lysine 329; these read RD and RNDR. Residues aspartate 396, histidine 400, aspartate 437, histidine 438, and histidine 455 each contribute to the Mn(2+) site.

It belongs to the BPG-independent phosphoglycerate mutase family. Monomer. Requires Mn(2+) as cofactor.

It carries out the reaction (2R)-2-phosphoglycerate = (2R)-3-phosphoglycerate. Its pathway is carbohydrate degradation; glycolysis; pyruvate from D-glyceraldehyde 3-phosphate: step 3/5. In terms of biological role, catalyzes the interconversion of 2-phosphoglycerate and 3-phosphoglycerate. The sequence is that of 2,3-bisphosphoglycerate-independent phosphoglycerate mutase from Bacteroides fragilis (strain YCH46).